Here is a 35-residue protein sequence, read N- to C-terminus: Photosystem II reaction center protein T (35 aa).

Residues 3 to 23 traverse the membrane as a helical segment; sequence ALVYTFLLVSTLGIIFFAIFF.

Belongs to the PsbT family. In terms of assembly, PSII is composed of 1 copy each of membrane proteins PsbA, PsbB, PsbC, PsbD, PsbE, PsbF, PsbH, PsbI, PsbJ, PsbK, PsbL, PsbM, PsbT, PsbY, PsbZ, Psb30/Ycf12, at least 3 peripheral proteins of the oxygen-evolving complex and a large number of cofactors. It forms dimeric complexes.

It is found in the plastid. Its subcellular location is the chloroplast thylakoid membrane. Functionally, found at the monomer-monomer interface of the photosystem II (PS II) dimer, plays a role in assembly and dimerization of PSII. PSII is a light-driven water plastoquinone oxidoreductase, using light energy to abstract electrons from H(2)O, generating a proton gradient subsequently used for ATP formation. The chain is Photosystem II reaction center protein T from Citrus sinensis (Sweet orange).